Here is a 307-residue protein sequence, read N- to C-terminus: Ribosomal RNA small subunit methyltransferase H (307 aa).

Residues 33 to 35 (GGY), Asp-51, Phe-82, Asp-96, and Gln-103 each bind S-adenosyl-L-methionine.

This sequence belongs to the methyltransferase superfamily. RsmH family.

Its subcellular location is the cytoplasm. The enzyme catalyses cytidine(1402) in 16S rRNA + S-adenosyl-L-methionine = N(4)-methylcytidine(1402) in 16S rRNA + S-adenosyl-L-homocysteine + H(+). In terms of biological role, specifically methylates the N4 position of cytidine in position 1402 (C1402) of 16S rRNA. This chain is Ribosomal RNA small subunit methyltransferase H, found in Rickettsia rickettsii (strain Iowa).